The chain runs to 286 residues: Aquaporin NIP1-3 (286 aa).

The interval Met1–Asn44 is disordered. Residues Gln11–Asn31 show a composition bias toward basic and acidic residues. Polar residues predominate over residues Gln34–Asn44. Helical transmembrane passes span Val56–Val76 and Val84–Val104. The short motif at Asn113–Ala115 is the NPA 1 element. 3 helical membrane-spanning segments follow: residues Val131–Phe153, Ser172–Thr192, and Leu200–Ser220. The short motif at Asn225 to Ala227 is the NPA 2 element. A helical membrane pass occupies residues Tyr239–Ala259.

It belongs to the MIP/aquaporin (TC 1.A.8) family. NIP (TC 1.A.8.12) subfamily.

The protein resides in the membrane. In terms of biological role, aquaporins facilitate the transport of water and small neutral solutes across cell membranes. In Oryza sativa subsp. japonica (Rice), this protein is Aquaporin NIP1-3 (NIP1-3).